The sequence spans 137 residues: Large ribosomal subunit protein uL16 (137 aa).

The tract at residues 1-22 is disordered; sequence MLQPKRTKFRKVQKGRNRGLAH.

It belongs to the universal ribosomal protein uL16 family. In terms of assembly, part of the 50S ribosomal subunit.

In terms of biological role, binds 23S rRNA and is also seen to make contacts with the A and possibly P site tRNAs. The polypeptide is Large ribosomal subunit protein uL16 (Chromohalobacter salexigens (strain ATCC BAA-138 / DSM 3043 / CIP 106854 / NCIMB 13768 / 1H11)).